We begin with the raw amino-acid sequence, 104 residues long: Holotricin-3 (104 aa).

Positions 1 to 20 (MNKLIILGLACIIAVASAMP) are cleaved as a signal peptide. A disordered region spans residues 22–104 (GPGDGHGGGH…HHGGYQTHGY (83 aa)). Gly residues predominate over residues 23–97 (PGDGHGGGHG…PGGHGGGHHG (75 aa)). 18 tandem repeats follow at residues 27 to 30 (HGGG), 31 to 34 (HGGG), 35 to 38 (HGGG), 39 to 42 (HGNG), 43 to 46 (QGGG), 47 to 50 (HGHG), 51 to 54 (PGGG), 55 to 58 (FGGG), 59 to 62 (HGGG), 63 to 66 (HGGG), 67 to 70 (GRGG), 71 to 74 (GGSG), 75 to 78 (GGGS), 79 to 82 (PGHG), 83 to 86 (AGGG), 87 to 90 (YPGG), 91 to 94 (HGGG), and 96 to 98 (HGG). Residues 27–98 (HGGGHGGGHG…GGHGGGHHGG (72 aa)) are 18 X 4 AA approximate tandem repeats of H-G-G-G.

This sequence to T.molitor tenecin 3.

The protein localises to the secreted. Has antifungal activity against C.albicans. This chain is Holotricin-3, found in Holotrichia diomphalia (Korean black chafer).